Here is a 419-residue protein sequence, read N- to C-terminus: Carboxypeptidase A2 (419 aa).

An N-terminal signal peptide occupies residues 1-18 (MAMRLILFFGALFGHIYC). Positions 19–114 (LETFVGDQVL…EMLFNRRRER (96 aa)) are cleaved as a propeptide — activation peptide. One can recognise a Peptidase M14 domain in the interval 122-414 (AYHTLEEISQ…LGLKAIMEHV (293 aa)). The Zn(2+) site is built by His-179 and Glu-182. Substrate contacts are provided by residues 179 to 182 (HARE), Arg-237, and 254 to 255 (NR). Residues Cys-248 and Cys-271 are joined by a disulfide bond. His-306 provides a ligand contact to Zn(2+). 307 to 308 (SY) is a binding site for substrate. Residues Cys-320 and Cys-354 are joined by a disulfide bond. A substrate-binding site is contributed by Tyr-358. Catalysis depends on Glu-380, which acts as the Proton donor/acceptor.

This sequence belongs to the peptidase M14 family. It depends on Zn(2+) as a cofactor.

It localises to the secreted. The enzyme catalyses Similar to that of carboxypeptidase A (EC 3.4.17.1), but with a preference for bulkier C-terminal residues.. Its function is as follows. Carboxypeptidase that catalyzes the release of a C-terminal amino acid, with a preference for large aromatic C-terminal residues. This chain is Carboxypeptidase A2 (CPA2), found in Homo sapiens (Human).